The sequence spans 117 residues: Large ribosomal subunit protein bL20 (117 aa).

The protein belongs to the bacterial ribosomal protein bL20 family.

In terms of biological role, binds directly to 23S ribosomal RNA and is necessary for the in vitro assembly process of the 50S ribosomal subunit. It is not involved in the protein synthesizing functions of that subunit. This Campylobacter hominis (strain ATCC BAA-381 / DSM 21671 / CCUG 45161 / LMG 19568 / NCTC 13146 / CH001A) protein is Large ribosomal subunit protein bL20.